The primary structure comprises 152 residues: Phospholipase A2 GL16-1 (152 aa).

The first 21 residues, 1–21 (MNPAHLLVLLAVCVSLLGAST), serve as a signal peptide directing secretion. Positions 22 to 27 (IPPLPL) are excised as a propeptide. 7 cysteine pairs are disulfide-bonded: Cys38–Cys104, Cys54–Cys151, Cys56–Cys72, Cys71–Cys132, Cys78–Cys125, Cys88–Cys118, and Cys111–Cys123. Residues Tyr55, Gly57, and Gly59 each contribute to the Ca(2+) site. His75 is a catalytic residue. Asp76 provides a ligand contact to Ca(2+). Asp126 is a catalytic residue.

The protein belongs to the phospholipase A2 family. Group I subfamily. Ca(2+) serves as cofactor.

The protein resides in the secreted. It catalyses the reaction a 1,2-diacyl-sn-glycero-3-phosphocholine + H2O = a 1-acyl-sn-glycero-3-phosphocholine + a fatty acid + H(+). Its function is as follows. PA2 catalyzes the calcium-dependent hydrolysis of the 2-acyl groups in 3-sn-phosphoglycerides. This Laticauda semifasciata (Black-banded sea krait) protein is Phospholipase A2 GL16-1.